Consider the following 1403-residue polypeptide: DNA-directed RNA polymerase subunit beta' (1403 aa).

The Zn(2+) site is built by Cys71, Cys73, Cys86, and Cys89. The Mg(2+) site is built by Asp462, Asp464, and Asp466. Zn(2+) contacts are provided by Cys820, Cys893, Cys900, and Cys903.

This sequence belongs to the RNA polymerase beta' chain family. In terms of assembly, the RNAP catalytic core consists of 2 alpha, 1 beta, 1 beta' and 1 omega subunit. When a sigma factor is associated with the core the holoenzyme is formed, which can initiate transcription. Mg(2+) is required as a cofactor. The cofactor is Zn(2+).

It catalyses the reaction RNA(n) + a ribonucleoside 5'-triphosphate = RNA(n+1) + diphosphate. Functionally, DNA-dependent RNA polymerase catalyzes the transcription of DNA into RNA using the four ribonucleoside triphosphates as substrates. The sequence is that of DNA-directed RNA polymerase subunit beta' from Methylobacterium radiotolerans (strain ATCC 27329 / DSM 1819 / JCM 2831 / NBRC 15690 / NCIMB 10815 / 0-1).